Here is a 476-residue protein sequence, read N- to C-terminus: Cysteine--tRNA ligase (476 aa).

Cys-28 provides a ligand contact to Zn(2+). A 'HIGH' region motif is present at residues 30–40 (PTVYDHTHLGH). Zn(2+)-binding residues include Cys-208, His-233, and Glu-237. The short motif at 265–269 (KMSKS) is the 'KMSKS' region element. Lys-268 contacts ATP.

Belongs to the class-I aminoacyl-tRNA synthetase family. Zn(2+) is required as a cofactor.

Its subcellular location is the cytoplasm. It catalyses the reaction tRNA(Cys) + L-cysteine + ATP = L-cysteinyl-tRNA(Cys) + AMP + diphosphate. This Methanococcus maripaludis (strain C7 / ATCC BAA-1331) protein is Cysteine--tRNA ligase.